Reading from the N-terminus, the 1361-residue chain is Pre-mRNA-splicing factor RSE1 (1361 aa).

Disordered stretches follow at residues 788–811 (NNEE…INSS) and 893–912 (VNKQ…EDEM). Acidic residues-rich tracts occupy residues 789-808 (NEEE…EEEI) and 903-912 (ESNEEEEDEM).

It belongs to the RSE1 family. As to quaternary structure, belongs to the SF3B complex, a U2 associated sub-complex of the spliceosome. The SF3B complex is composed of at least CUS1, HSH49, HSH155, RDS3 and RSE1. Also belongs to the CWC complex (or CEF1-associated complex), a spliceosome sub-complex reminiscent of a late-stage spliceosome composed of the U2, U5 and U6 snRNAs and at least BUD13, BUD31, BRR2, CDC40, CEF1, CLF1, CUS1, CWC2, CWC15, CWC21, CWC22, CWC23, CWC24, CWC25, CWC27, ECM2, HSH155, IST3, ISY1, LEA1, MSL1, NTC20, PRP8, PRP9, PRP11, PRP19, PRP21, PRP22, PRP45, PRP46, SLU7, SMB1, SMD1, SMD2, SMD3, SMX2, SMX3, SNT309, SNU114, SPP2, SYF1, SYF2, RSE1 and YJU2. Interacts with RDS3.

It localises to the nucleus. Involved in G2/M transition. Required for pre-mRNA splicing and endoplasmic reticulum (ER) to Golgi secretion pathway. U2 snRNPs associated protein required for the pre-spliceosome assembly. The involvement in ER to Golgi secretion is probably indirect and due to the splicing of the pre-mRNA coding for SAR1, a small GTP-binding protein required for COPII vesicle formation from the ER. The chain is Pre-mRNA-splicing factor RSE1 (RSE1) from Saccharomyces cerevisiae (strain ATCC 204508 / S288c) (Baker's yeast).